The following is a 350-amino-acid chain: Glycerol-1-phosphate dehydrogenase [NAD(P)+] (350 aa).

Residues 97–101 (GSKID) and 119–122 (TTPS) each bind NAD(+). Asp124 contacts substrate. Position 128 (Ser128) interacts with NAD(+). A substrate-binding site is contributed by Asp171. Zn(2+) is bound by residues Asp171 and His251. His255 lines the substrate pocket. A Zn(2+)-binding site is contributed by His267.

This sequence belongs to the glycerol-1-phosphate dehydrogenase family. Requires Zn(2+) as cofactor.

The protein resides in the cytoplasm. It catalyses the reaction sn-glycerol 1-phosphate + NAD(+) = dihydroxyacetone phosphate + NADH + H(+). The enzyme catalyses sn-glycerol 1-phosphate + NADP(+) = dihydroxyacetone phosphate + NADPH + H(+). Its pathway is membrane lipid metabolism; glycerophospholipid metabolism. Functionally, catalyzes the NAD(P)H-dependent reduction of dihydroxyacetonephosphate (DHAP or glycerone phosphate) to glycerol 1-phosphate (G1P). The G1P thus generated is used as the glycerophosphate backbone of phospholipids in the cellular membranes of Archaea. The chain is Glycerol-1-phosphate dehydrogenase [NAD(P)+] from Picrophilus torridus (strain ATCC 700027 / DSM 9790 / JCM 10055 / NBRC 100828 / KAW 2/3).